The chain runs to 231 residues: Cytochrome c oxidase subunit 2 (231 aa).

The Mitochondrial intermembrane portion of the chain corresponds to 1–14 (MAHPSQLGLQDAAS). Residues 15–45 (PVMEELLHFHDHALMIVFLISTLVFYIILAM) form a helical membrane-spanning segment. The Mitochondrial matrix portion of the chain corresponds to 46–59 (MTTKMTDKYILDAQ). The helical transmembrane segment at 60-87 (EIEIVWTLLPAIVLILVALPSLRILYLI) threads the bilayer. The Mitochondrial intermembrane segment spans residues 88–231 (DEVENPHLTI…WSSSMLEEAX (144 aa)). Positions 161, 196, 198, 200, 204, and 207 each coordinate Cu cation. Glu198 is a Mg(2+) binding site.

The protein belongs to the cytochrome c oxidase subunit 2 family. Component of the cytochrome c oxidase (complex IV, CIV), a multisubunit enzyme composed of 14 subunits. The complex is composed of a catalytic core of 3 subunits MT-CO1, MT-CO2 and MT-CO3, encoded in the mitochondrial DNA, and 11 supernumerary subunits COX4I, COX5A, COX5B, COX6A, COX6B, COX6C, COX7A, COX7B, COX7C, COX8 and NDUFA4, which are encoded in the nuclear genome. The complex exists as a monomer or a dimer and forms supercomplexes (SCs) in the inner mitochondrial membrane with NADH-ubiquinone oxidoreductase (complex I, CI) and ubiquinol-cytochrome c oxidoreductase (cytochrome b-c1 complex, complex III, CIII), resulting in different assemblies (supercomplex SCI(1)III(2)IV(1) and megacomplex MCI(2)III(2)IV(2)). Found in a complex with TMEM177, COA6, COX18, COX20, SCO1 and SCO2. Interacts with TMEM177 in a COX20-dependent manner. Interacts with COX20. Interacts with COX16. Cu cation is required as a cofactor.

It is found in the mitochondrion inner membrane. It catalyses the reaction 4 Fe(II)-[cytochrome c] + O2 + 8 H(+)(in) = 4 Fe(III)-[cytochrome c] + 2 H2O + 4 H(+)(out). In terms of biological role, component of the cytochrome c oxidase, the last enzyme in the mitochondrial electron transport chain which drives oxidative phosphorylation. The respiratory chain contains 3 multisubunit complexes succinate dehydrogenase (complex II, CII), ubiquinol-cytochrome c oxidoreductase (cytochrome b-c1 complex, complex III, CIII) and cytochrome c oxidase (complex IV, CIV), that cooperate to transfer electrons derived from NADH and succinate to molecular oxygen, creating an electrochemical gradient over the inner membrane that drives transmembrane transport and the ATP synthase. Cytochrome c oxidase is the component of the respiratory chain that catalyzes the reduction of oxygen to water. Electrons originating from reduced cytochrome c in the intermembrane space (IMS) are transferred via the dinuclear copper A center (CU(A)) of subunit 2 and heme A of subunit 1 to the active site in subunit 1, a binuclear center (BNC) formed by heme A3 and copper B (CU(B)). The BNC reduces molecular oxygen to 2 water molecules using 4 electrons from cytochrome c in the IMS and 4 protons from the mitochondrial matrix. This Latimeria chalumnae (Coelacanth) protein is Cytochrome c oxidase subunit 2 (MT-CO2).